A 132-amino-acid polypeptide reads, in one-letter code: uncharacterized protein (132 aa).

Transmembrane regions (helical) follow at residues 28 to 48 (LLRLISLCIPIIRPFSFLIYP), 59 to 79 (ILPSILPIIPFAISSSLLFSY), and 106 to 126 (LLVASFVYLPYRSPLPVVIEI).

It is found in the membrane. This is an uncharacterized protein from Schizosaccharomyces pombe (strain 972 / ATCC 24843) (Fission yeast).